A 179-amino-acid polypeptide reads, in one-letter code: NAD(P)H-quinone oxidoreductase subunit J (179 aa).

It belongs to the complex I 30 kDa subunit family. In terms of assembly, NDH-1 can be composed of about 15 different subunits; different subcomplexes with different compositions have been identified which probably have different functions. In terms of processing, in at one experiment the initiator methionine has been seen to be kept and removed.

The protein localises to the cellular thylakoid membrane. The catalysed reaction is a plastoquinone + NADH + (n+1) H(+)(in) = a plastoquinol + NAD(+) + n H(+)(out). The enzyme catalyses a plastoquinone + NADPH + (n+1) H(+)(in) = a plastoquinol + NADP(+) + n H(+)(out). In terms of biological role, NDH-1 shuttles electrons from an unknown electron donor, via FMN and iron-sulfur (Fe-S) centers, to quinones in the respiratory and/or the photosynthetic chain. The immediate electron acceptor for the enzyme in this species is believed to be plastoquinone. Couples the redox reaction to proton translocation, and thus conserves the redox energy in a proton gradient. Cyanobacterial NDH-1 also plays a role in inorganic carbon-concentration. This is NAD(P)H-quinone oxidoreductase subunit J from Synechocystis sp. (strain ATCC 27184 / PCC 6803 / Kazusa).